The chain runs to 424 residues: MSVKWEKQEGNEGVLTVEVDADTFNKALDDAFKKVVKQVSIPGFRKGKVPRGLFEQRFGVEALYQDALDILLPVEYPKAVEEAGIEPVDRPEIDVEKIEKGENLIFTAKVTVKPEVKLGEYKGLGIEKDDTAVTDEDVQNELKSLQERQAELVVKEDGKVEEGDTVVLDFEGFVDGEAFEGGKAENYSLEVGSGSFIPGFEDQLVGLEAGAEKDVEVTFPEEYHAEELAGKPAVFKVKIHEIKAKELPELDDEFAKDVDEEVGTLAELTEKTKKRLEEAKENEADAKLREELVLKAAENAEADIPQAMIDTELDRMMKEFEQRLQMQGMNLELYFQFSGQDENALKEQMKEDAEKRVKSNLTLEAIAKAENLQVTDEEVEEELSKMAEAYNMPVENIKQAIGSTDGMKEDLKVRKAIDFLVENR.

Positions 163–248 (GDTVVLDFEG…IHEIKAKELP (86 aa)) constitute a PPIase FKBP-type domain.

It belongs to the FKBP-type PPIase family. Tig subfamily.

It localises to the cytoplasm. The enzyme catalyses [protein]-peptidylproline (omega=180) = [protein]-peptidylproline (omega=0). In terms of biological role, involved in protein export. Acts as a chaperone by maintaining the newly synthesized protein in an open conformation. Functions as a peptidyl-prolyl cis-trans isomerase. The protein is Trigger factor of Bacillus licheniformis (strain ATCC 14580 / DSM 13 / JCM 2505 / CCUG 7422 / NBRC 12200 / NCIMB 9375 / NCTC 10341 / NRRL NRS-1264 / Gibson 46).